The primary structure comprises 330 residues: MSTPPAKRQKRDQYRKRAAAAANEDTGKVKLPQKKFYRQRAHANPFSDHQLDYPLSPAHMDWSSHYPAFVNPDPEQKNLAGARKLLKDVEVVDIGCGFGGLLVGLAPLLPETLMLGMEIRTQVIEYVENRIQALRTQQNQLKNSSTTASESPAPAIPAEPATDGASPDAASTPETSNSPVPGGYQNISALRSNTMKFFPNFFGKQQLSKIFICFPDPHFKAKKHKARIISENLNAEYAYALKPGGLLYTITDVEEYHHWVLRHFREEGEHEASEGGVKDLFERVSEEELASDPCVEVMRESTEEGKKVTRNKGNKYVAVFRRKADPEWPA.

Positions 1 to 27 (MSTPPAKRQKRDQYRKRAAAAANEDTG) are disordered. Residues 7–18 (KRQKRDQYRKRA) are compositionally biased toward basic residues. Residues Gly-95 and 118–119 (EI) each bind S-adenosyl-L-methionine. The disordered stretch occupies residues 138–185 (QNQLKNSSTTASESPAPAIPAEPATDGASPDAASTPETSNSPVPGGYQ). Over residues 144–162 (SSTTASESPAPAIPAEPAT) the composition is skewed to low complexity. Positions 172-185 (TPETSNSPVPGGYQ) are enriched in polar residues. S-adenosyl-L-methionine-binding positions include 193 to 194 (NT) and Cys-213. Asp-216 is a catalytic residue. 302–304 (TEE) is an S-adenosyl-L-methionine binding site.

The protein belongs to the class I-like SAM-binding methyltransferase superfamily. TrmB family. In terms of assembly, forms a complex with trm82.

Its subcellular location is the nucleus. The enzyme catalyses guanosine(46) in tRNA + S-adenosyl-L-methionine = N(7)-methylguanosine(46) in tRNA + S-adenosyl-L-homocysteine. The protein operates within tRNA modification; N(7)-methylguanine-tRNA biosynthesis. Its function is as follows. Catalyzes the formation of N(7)-methylguanine at position 46 (m7G46) in tRNA. In Aspergillus oryzae (strain ATCC 42149 / RIB 40) (Yellow koji mold), this protein is tRNA (guanine-N(7)-)-methyltransferase (trm8).